Here is a 444-residue protein sequence, read N- to C-terminus: tRNA (guanine-N(7)-)-methyltransferase non-catalytic subunit TRM82 (444 aa).

7 WD repeats span residues 1-47 (MSVI…WSDD), 48-99 (FDKI…LGAP), 100-147 (PIYS…KRFC), 148-192 (FSKR…EPIL), 193-237 (GHVS…DKWL), 238-279 (FGHK…STFD), and 308-354 (FAVS…ITFP). The disordered stretch occupies residues 55–92 (RNTTAKEQQGQSSENENENKKLKSNKGDSIKRTAAKVP). Residues 71–85 (NENKKLKSNKGDSIK) show a composition bias toward basic and acidic residues. Ser93 carries the phosphoserine modification.

The protein belongs to the WD repeat TRM82 family. In terms of assembly, forms a heterodimer with the catalytic subunit TRM8.

It is found in the nucleus. It participates in tRNA modification; N(7)-methylguanine-tRNA biosynthesis. Functionally, required for the formation of N(7)-methylguanine at position 46 (m7G46) in tRNA, a modification required to maintain stability of tRNAs; its absence resulting in tRNA decay. In the complex, it is required to stabilize and induce conformational changes of the catalytic subunit. This chain is tRNA (guanine-N(7)-)-methyltransferase non-catalytic subunit TRM82, found in Saccharomyces cerevisiae (strain ATCC 204508 / S288c) (Baker's yeast).